The sequence spans 159 residues: NADH-quinone oxidoreductase subunit B (159 aa).

[4Fe-4S] cluster-binding residues include Cys-36, Cys-37, Cys-102, and Cys-132.

This sequence belongs to the complex I 20 kDa subunit family. NDH-1 is composed of 14 different subunits. Subunits NuoB, C, D, E, F, and G constitute the peripheral sector of the complex. It depends on [4Fe-4S] cluster as a cofactor.

It is found in the cell inner membrane. It catalyses the reaction a quinone + NADH + 5 H(+)(in) = a quinol + NAD(+) + 4 H(+)(out). Functionally, NDH-1 shuttles electrons from NADH, via FMN and iron-sulfur (Fe-S) centers, to quinones in the respiratory chain. The immediate electron acceptor for the enzyme in this species is believed to be ubiquinone. Couples the redox reaction to proton translocation (for every two electrons transferred, four hydrogen ions are translocated across the cytoplasmic membrane), and thus conserves the redox energy in a proton gradient. This Acidovorax ebreus (strain TPSY) (Diaphorobacter sp. (strain TPSY)) protein is NADH-quinone oxidoreductase subunit B.